The following is a 117-amino-acid chain: Small ribosomal subunit protein uS13 (117 aa).

A disordered region spans residues 94–117 (SLPLRGQRTKTNARTRKGPRRLIK).

The protein belongs to the universal ribosomal protein uS13 family. Part of the 30S ribosomal subunit. Forms a loose heterodimer with protein S19. Forms two bridges to the 50S subunit in the 70S ribosome.

Located at the top of the head of the 30S subunit, it contacts several helices of the 16S rRNA. In the 70S ribosome it contacts the 23S rRNA (bridge B1a) and protein L5 of the 50S subunit (bridge B1b), connecting the 2 subunits; these bridges are implicated in subunit movement. Contacts the tRNAs in the A and P-sites. The sequence is that of Small ribosomal subunit protein uS13 from Vesicomyosocius okutanii subsp. Calyptogena okutanii (strain HA).